A 144-amino-acid polypeptide reads, in one-letter code: Large ribosomal subunit protein uL15 (144 aa).

The segment at 1–50 (MRLNTLSPAAGAKSAKKRVGRGIGSGLGKTGGRGVKGAGSRSGGGVRAGF) is disordered. Positions 21 to 50 (RGIGSGLGKTGGRGVKGAGSRSGGGVRAGF) are enriched in gly residues.

This sequence belongs to the universal ribosomal protein uL15 family. As to quaternary structure, part of the 50S ribosomal subunit.

Functionally, binds to the 23S rRNA. The polypeptide is Large ribosomal subunit protein uL15 (Tolumonas auensis (strain DSM 9187 / NBRC 110442 / TA 4)).